Reading from the N-terminus, the 491-residue chain is N-succinylglutamate 5-semialdehyde dehydrogenase (491 aa).

NAD(+) is bound at residue Gly225–Gly230. Catalysis depends on residues Glu248 and Cys282.

The protein belongs to the aldehyde dehydrogenase family. AstD subfamily.

It carries out the reaction N-succinyl-L-glutamate 5-semialdehyde + NAD(+) + H2O = N-succinyl-L-glutamate + NADH + 2 H(+). The protein operates within amino-acid degradation; L-arginine degradation via AST pathway; L-glutamate and succinate from L-arginine: step 4/5. In terms of biological role, catalyzes the NAD-dependent reduction of succinylglutamate semialdehyde into succinylglutamate. The protein is N-succinylglutamate 5-semialdehyde dehydrogenase of Marinobacter nauticus (strain ATCC 700491 / DSM 11845 / VT8) (Marinobacter aquaeolei).